Consider the following 253-residue polypeptide: Probable transcriptional regulatory protein TM_0466 (253 aa).

Belongs to the TACO1 family.

Its subcellular location is the cytoplasm. This Thermotoga maritima (strain ATCC 43589 / DSM 3109 / JCM 10099 / NBRC 100826 / MSB8) protein is Probable transcriptional regulatory protein TM_0466.